Reading from the N-terminus, the 393-residue chain is CCA-adding enzyme (393 aa).

Residues Gly27 and Arg30 each contribute to the ATP site. Gly27 and Arg30 together coordinate CTP. Residues Asp40 and Asp42 each coordinate Mg(2+). ATP is bound by residues Arg111, Asp154, Arg157, Arg160, and Arg163. Arg111, Asp154, Arg157, Arg160, and Arg163 together coordinate CTP.

This sequence belongs to the tRNA nucleotidyltransferase/poly(A) polymerase family. Bacterial CCA-adding enzyme type 3 subfamily. Homodimer. The cofactor is Mg(2+).

It carries out the reaction a tRNA precursor + 2 CTP + ATP = a tRNA with a 3' CCA end + 3 diphosphate. The enzyme catalyses a tRNA with a 3' CCA end + 2 CTP + ATP = a tRNA with a 3' CCACCA end + 3 diphosphate. In terms of biological role, catalyzes the addition and repair of the essential 3'-terminal CCA sequence in tRNAs without using a nucleic acid template. Adds these three nucleotides in the order of C, C, and A to the tRNA nucleotide-73, using CTP and ATP as substrates and producing inorganic pyrophosphate. tRNA 3'-terminal CCA addition is required both for tRNA processing and repair. Also involved in tRNA surveillance by mediating tandem CCA addition to generate a CCACCA at the 3' terminus of unstable tRNAs. While stable tRNAs receive only 3'-terminal CCA, unstable tRNAs are marked with CCACCA and rapidly degraded. This is CCA-adding enzyme from Listeria innocua serovar 6a (strain ATCC BAA-680 / CLIP 11262).